A 360-amino-acid chain; its full sequence is Leukotriene B4 receptor 2 (360 aa).

The Extracellular portion of the chain corresponds to 1–24; sequence MSVCYRPPGNETLLSWKGSRATGT. N-linked (GlcNAc...) asparagine glycosylation occurs at asparagine 10. A helical membrane pass occupies residues 25–45; that stretch reads AFLLLAALLGLPGNGFVVWSL. Over 46–60 the chain is Cytoplasmic; the sequence is AGWRPTAGRPLAATL. Residues 61-81 traverse the membrane as a helical segment; it reads VLHLALADGAVLLLTPLFVAF. Over 82–96 the chain is Extracellular; the sequence is LSQEAWPLGQVGCKA. Residues 97–117 form a helical membrane-spanning segment; that stretch reads VYYVCALSMYASVLLTGLLSL. Over 118–140 the chain is Cytoplasmic; it reads QRCLAVTRPFLAPRLRSPALARR. A helical membrane pass occupies residues 141-161; that stretch reads LLLGVWLAALVLAVPAAVYRH. Residues 162–185 are Extracellular-facing; it reads LWGGRVCQLCHPSPVHAAAHLSLE. A helical transmembrane segment spans residues 186–206; it reads TLTAFVLPFGTVLGCYGVTLA. Topologically, residues 207-224 are cytoplasmic; sequence RLRGARWGSGRQGTRVGR. The chain crosses the membrane as a helical span at residues 225 to 245; the sequence is LVSAIVLAFGLLWAPYHAVNL. The Extracellular portion of the chain corresponds to 246–275; sequence LQAVAALAPPEGPLARLGGAGQAARAGTTA. A helical transmembrane segment spans residues 276 to 296; sequence LAFFSSSVNPVLYVFTAGDLL. The Cytoplasmic portion of the chain corresponds to 297 to 360; the sequence is PRAGPRFLTR…GKTEKDSQEW (64 aa). The tract at residues 311–360 is disordered; the sequence is SGEARGGSRSREGTMELRTTPKLKVMGQGRGNGDPGGGDGGKTEKDSQEW. The segment covering 338–350 has biased composition (gly residues); the sequence is QGRGNGDPGGGDG. A compositionally biased stretch (basic and acidic residues) spans 351-360; the sequence is GKTEKDSQEW.

This sequence belongs to the G-protein coupled receptor 1 family.

Its subcellular location is the cell membrane. In terms of biological role, low-affinity receptor for leukotrienes including leukotriene B4. Mediates chemotaxis of granulocytes and macrophages. The response is mediated via G-proteins that activate a phosphatidylinositol-calcium second messenger system. The sequence is that of Leukotriene B4 receptor 2 (Ltb4r2) from Mus musculus (Mouse).